The primary structure comprises 308 residues: Tetraacyldisaccharide 4'-kinase (308 aa).

ATP is bound at residue 63–70 (SFGGNGKT).

It belongs to the LpxK family.

It carries out the reaction a lipid A disaccharide + ATP = a lipid IVA + ADP + H(+). It functions in the pathway glycolipid biosynthesis; lipid IV(A) biosynthesis; lipid IV(A) from (3R)-3-hydroxytetradecanoyl-[acyl-carrier-protein] and UDP-N-acetyl-alpha-D-glucosamine: step 6/6. Functionally, transfers the gamma-phosphate of ATP to the 4'-position of a tetraacyldisaccharide 1-phosphate intermediate (termed DS-1-P) to form tetraacyldisaccharide 1,4'-bis-phosphate (lipid IVA). The protein is Tetraacyldisaccharide 4'-kinase of Campylobacter jejuni (strain RM1221).